Reading from the N-terminus, the 408-residue chain is Snake venom metalloproteinase BaP1 (408 aa).

Positions 1-20 are cleaved as a signal peptide; the sequence is MIEVLLVTICLAVFPYQGSS. Positions 21–191 are excised as a propeptide; that stretch reads IILESGNVND…KASQSNLTPE (171 aa). Q192 carries the post-translational modification Pyrrolidone carboxylic acid. The Peptidase M12B domain maps to 198-394; the sequence is RYIELAVVAD…HNPQCILNKP (197 aa). 3 disulfide bridges follow: C309-C389, C349-C373, and C351-C356. H334 is a binding site for Zn(2+). The active site involves E335. Residues H338 and H344 each coordinate Zn(2+). Residues 395 to 408 constitute a propeptide that is removed on maturation; sequence LLTVSGNELLEAGE.

It belongs to the venom metalloproteinase (M12B) family. P-I subfamily. As to quaternary structure, monomer. It depends on Zn(2+) as a cofactor. As to expression, expressed by the venom gland.

Its subcellular location is the secreted. Inhibited by EDTA, partially inhibited by o-phenantropine, and not inhibited by PMSF, pepstatin A, and aprotinin. Functionally, zinc metalloprotease that exhibits a weak hemorrhagic activity (with a minimum hemorrhagic dose of 20 ug by intradermal and intramuscular injection into mice). The basal membrane components collagen (all chains of type IV) (COL4A4), laminin and nidogen are all degraded by this toxin. Rapidly degrades the Aalpha-chain (FGA) of fibrinogen, and later on, degrades the Bbeta-chain (FGB) of fibrinogen. Also activates the complement system, and induces rat neutrophil chemotaxis. Induces edema in mouse food pad and shows a mild myotoxicity. The chain is Snake venom metalloproteinase BaP1 from Bothrops asper (Terciopelo).